A 54-amino-acid polypeptide reads, in one-letter code: Ovomucoid (54 aa).

The 51-residue stretch at 4–54 folds into the Kazal-like domain; that stretch reads VDCSGYPQSACPQDYVPFCGSDNKTYSNKCNFCNAVADSNGTLTLSHFGKC. Cystine bridges form between Cys6/Cys36, Cys14/Cys33, and Cys22/Cys54. Asn43 is a glycosylation site (N-linked (GlcNAc...) asparagine).

Its subcellular location is the secreted. This Gallirallus australis (Weka) protein is Ovomucoid.